The following is a 241-amino-acid chain: ATP synthase subunit a (241 aa).

5 consecutive transmembrane segments (helical) span residues 21–41 (LASI…AIAC), 84–104 (VTLI…AIVI), 116–136 (DATV…YYGI), 183–203 (ILIG…WIIG), and 207–227 (LIAW…IFIM).

This sequence belongs to the ATPase A chain family. As to quaternary structure, F-type ATPases have 2 components, CF(1) - the catalytic core - and CF(0) - the membrane proton channel. CF(1) has five subunits: alpha(3), beta(3), gamma(1), delta(1), epsilon(1). CF(0) has three main subunits: a(1), b(2) and c(9-12). The alpha and beta chains form an alternating ring which encloses part of the gamma chain. CF(1) is attached to CF(0) by a central stalk formed by the gamma and epsilon chains, while a peripheral stalk is formed by the delta and b chains.

The protein resides in the cell membrane. Functionally, key component of the proton channel; it plays a direct role in the translocation of protons across the membrane. The polypeptide is ATP synthase subunit a (Staphylococcus carnosus (strain TM300)).